A 192-amino-acid polypeptide reads, in one-letter code: Ion-translocating oxidoreductase complex subunit B (192 aa).

The interval 1 to 26 (MNAIWIAVAAVSLLGLAFGAILGYAS) is hydrophobic. The region spanning 32–91 (EDDPVVEKIDEILPQSQCGQCGYPGCRPYAETISCNGEKINRCAPGGEAVMLKIAELLNV) is the 4Fe-4S domain. C49, C52, C57, C74, C117, C120, C123, C127, C147, C150, C153, and C157 together coordinate [4Fe-4S] cluster. 4Fe-4S ferredoxin-type domains are found at residues 108–137 (MVAVIDENNCIGCTKCIQACPVDAIVGATR) and 138–167 (AMHTVMSDLCTGCNLCVDPCPTHCISLQPV).

This sequence belongs to the 4Fe4S bacterial-type ferredoxin family. RnfB subfamily. As to quaternary structure, the complex is composed of six subunits: RsxA, RsxB, RsxC, RsxD, RsxE and RsxG. It depends on [4Fe-4S] cluster as a cofactor.

Its subcellular location is the cell inner membrane. Functionally, part of a membrane-bound complex that couples electron transfer with translocation of ions across the membrane. Required to maintain the reduced state of SoxR. This chain is Ion-translocating oxidoreductase complex subunit B, found in Escherichia coli O6:K15:H31 (strain 536 / UPEC).